The primary structure comprises 477 residues: UDP-N-acetylmuramate--L-alanine ligase (477 aa).

125 to 131 (GTHGKTT) lines the ATP pocket.

It belongs to the MurCDEF family.

It localises to the cytoplasm. The enzyme catalyses UDP-N-acetyl-alpha-D-muramate + L-alanine + ATP = UDP-N-acetyl-alpha-D-muramoyl-L-alanine + ADP + phosphate + H(+). It participates in cell wall biogenesis; peptidoglycan biosynthesis. Its function is as follows. Cell wall formation. This is UDP-N-acetylmuramate--L-alanine ligase from Acidothermus cellulolyticus (strain ATCC 43068 / DSM 8971 / 11B).